The following is a 338-amino-acid chain: L-asparaginase 1 (338 aa).

Residues 4–329 form the Asparaginase/glutaminase domain; that stretch reads KSIYVAYTGG…ETIRKAMSQN (326 aa). Residue Thr-14 is the O-isoaspartyl threonine intermediate of the active site. Substrate-binding positions include 59-61 and 91-92; these read DSS and TD.

The protein belongs to the asparaginase 1 family. Homotetramer.

The protein localises to the cytoplasm. The enzyme catalyses L-asparagine + H2O = L-aspartate + NH4(+). The chain is L-asparaginase 1 (ansA) from Escherichia coli O157:H7.